The following is a 299-amino-acid chain: MEPPIPQSVPLTPSSVMVQPLLDSRTAHSRLQHPLTILPIDQMKTSHVENDYIDNPGLAPPSGPKRTRGGAPELAPTPARCDQDVTHHWISFSGRPSSVSSSSSTSSDQRLLDHMAPPPVADQASPRAVRIQPKAIHCKPLDLKGPAGPPELDKHFLLCEACGKCKCKECASPRTLPSCWVCNQECLCSAQTLVNYGTCMCLVQGIFYHCTNEDDEGSCADHPCSCSRSNCCARWSFMGALSLVLPCLLCYLPATGCVKLAQRGYDRLRRPGCRCKHTNSVICKAAAGDAKASRPDKPF.

Residue M1 is modified to N-acetylmethionine. Disordered regions lie at residues 50 to 79 (NDYI…PTPA) and 92 to 127 (FSGR…ASPR). Residues 92 to 107 (FSGRPSSVSSSSSTSS) show a composition bias toward low complexity. Residue S125 is modified to Phosphoserine. The SPR domain occupies 166 to 273 (KCKECASPRT…GYDRLRRPGC (108 aa)).

Belongs to the sprouty family. As to quaternary structure, interacts (via C-terminus) with TESK1 (via both C- and N-termini); the interaction inhibits TESK1 kinase activity. Interacts with RAF1. Interacts with CAV1 (via C-terminus).

It localises to the cytoplasm. It is found in the cell projection. The protein resides in the ruffle membrane. Its function is as follows. Suppresses the insulin receptor and EGFR-transduced MAPK signaling pathway, but does not inhibit MAPK activation by a constitutively active mutant Ras. Probably impairs the formation of GTP-Ras. Inhibits Ras-independent, but not Ras-dependent, activation of RAF1. Represses integrin-mediated cell spreading via inhibition of TESK1-mediated phosphorylation of cofilin. This is Protein sprouty homolog 4 (SPRY4) from Bos taurus (Bovine).